The chain runs to 331 residues: CRISPR-associated endonuclease Cas1 (331 aa).

Mn(2+)-binding residues include Glu-166, His-228, and Asp-243.

It belongs to the CRISPR-associated endonuclease Cas1 family. In terms of assembly, homodimer, forms a heterotetramer with a Cas2 homodimer. Requires Mg(2+) as cofactor. It depends on Mn(2+) as a cofactor.

Functionally, CRISPR (clustered regularly interspaced short palindromic repeat), is an adaptive immune system that provides protection against mobile genetic elements (viruses, transposable elements and conjugative plasmids). CRISPR clusters contain spacers, sequences complementary to antecedent mobile elements, and target invading nucleic acids. CRISPR clusters are transcribed and processed into CRISPR RNA (crRNA). Acts as a dsDNA endonuclease. Involved in the integration of spacer DNA into the CRISPR cassette. In Hyperthermus butylicus (strain DSM 5456 / JCM 9403 / PLM1-5), this protein is CRISPR-associated endonuclease Cas1.